The following is a 337-amino-acid chain: tRNA N6-adenosine threonylcarbamoyltransferase (337 aa).

Fe cation-binding residues include His-111 and His-115. Residues Leu-134–Gly-138, Asp-167, Gly-180, and Asn-272 contribute to the substrate site. A Fe cation-binding site is contributed by Asp-300.

The protein belongs to the KAE1 / TsaD family. Fe(2+) is required as a cofactor.

It localises to the cytoplasm. The enzyme catalyses L-threonylcarbamoyladenylate + adenosine(37) in tRNA = N(6)-L-threonylcarbamoyladenosine(37) in tRNA + AMP + H(+). Required for the formation of a threonylcarbamoyl group on adenosine at position 37 (t(6)A37) in tRNAs that read codons beginning with adenine. Is involved in the transfer of the threonylcarbamoyl moiety of threonylcarbamoyl-AMP (TC-AMP) to the N6 group of A37, together with TsaE and TsaB. TsaD likely plays a direct catalytic role in this reaction. This is tRNA N6-adenosine threonylcarbamoyltransferase from Cronobacter sakazakii (strain ATCC BAA-894) (Enterobacter sakazakii).